The following is a 257-amino-acid chain: Small ribosomal subunit protein uS15m (257 aa).

Residues 1-57 (MLRVAWRTLSLIRTRAVTQVLVPGLPGGGSAKFPFNQWGLQPRSLLLQAARGYVVRK) constitute a mitochondrion transit peptide. The tract at residues 225 to 257 (RALKAAAAAQKQAKRRNPDSPAKAIPKTLKDSQ) is disordered.

The protein belongs to the universal ribosomal protein uS15 family. In terms of assembly, component of the mitochondrial small ribosomal subunit (mt-SSU). Mature mammalian 55S mitochondrial ribosomes consist of a small (28S) and a large (39S) subunit. The 28S small subunit contains a 12S ribosomal RNA (12S mt-rRNA) and 30 different proteins. The 39S large subunit contains a 16S rRNA (16S mt-rRNA), a copy of mitochondrial valine transfer RNA (mt-tRNA(Val)), which plays an integral structural role, and 52 different proteins. Interacts with METTL17.

Its subcellular location is the mitochondrion matrix. The polypeptide is Small ribosomal subunit protein uS15m (MRPS15) (Homo sapiens (Human)).